A 78-amino-acid chain; its full sequence is Protein SlyX homolog (78 aa).

It belongs to the SlyX family.

In Photobacterium profundum (strain SS9), this protein is Protein SlyX homolog.